Here is a 253-residue protein sequence, read N- to C-terminus: Phycoerythrobilin:ferredoxin oxidoreductase (253 aa).

The protein belongs to the HY2 family.

It catalyses the reaction (3Z)-phycoerythrobilin + oxidized 2[4Fe-4S]-[ferredoxin] = 15,16-dihydrobiliverdin + reduced 2[4Fe-4S]-[ferredoxin] + 2 H(+). In terms of biological role, catalyzes the two-electron reduction of the C2 and C3(1) diene system of 15,16-dihydrobiliverdin. The polypeptide is Phycoerythrobilin:ferredoxin oxidoreductase (Prochlorococcus marinus (strain MIT 9312)).